The sequence spans 351 residues: SH3 domain-containing protein 3 (351 aa).

Coiled-coil stretches lie at residues 1–21 (MDAFRRQASKLRDQVAKQQLA) and 193–213 (LQLAEAKMQELKANMAVLGKE). One can recognise a BAR domain in the interval 31-267 (YESSDVMVID…MVTEKQHKES (237 aa)). The 60-residue stretch at 281–340 (TSYFLAEVIHPFSAASEKELDLDKGDYIVVRKVSQTGWAEGECKGKAGWFPMAYIEKRQR) folds into the SH3 domain.

In terms of assembly, interacts with FREE1. Interacts (via SH3 domain) with DRP2A/ADL6. Binds to SH3P2. As to expression, detected in all tissues except seedlings.

It is found in the cytoplasmic vesicle. It localises to the clathrin-coated vesicle. In terms of biological role, may be involved in the recruitment of DRP2A to the accessory protein complex and in the negative regulation of its GTPase activity. The chain is SH3 domain-containing protein 3 from Arabidopsis thaliana (Mouse-ear cress).